We begin with the raw amino-acid sequence, 600 residues long: Pyranose dehydrogenase (600 aa).

A signal peptide spans Met-1–Gly-25. 2 N-linked (GlcNAc...) asparagine glycosylation sites follow: Asn-99 and Asn-114. His-127 is subject to Tele-8alpha-FAD histidine. Residues Asn-199, Asn-275, Asn-342, Asn-399, and Asn-507 are each glycosylated (N-linked (GlcNAc...) asparagine). The active-site Proton acceptor is His-535. The N-linked (GlcNAc...) asparagine glycan is linked to Asn-546. His-579 is a catalytic residue.

This sequence belongs to the GMC oxidoreductase family. As to quaternary structure, monomer. Requires FAD as cofactor. In terms of processing, N-glycosylated.

The protein localises to the secreted. The catalysed reaction is pyranose + acceptor = pyranos-2-ulose + reduced acceptor.. The enzyme catalyses pyranose + acceptor = pyranos-3-ulose + reduced acceptor.. It catalyses the reaction pyranose + acceptor = pyranos-2,3-diulose + reduced acceptor.. It carries out the reaction a pyranoside + acceptor = a pyranosid-3-ulose + reduced acceptor.. The catalysed reaction is a pyranoside + acceptor = a pyranosid-3,4-diulose + reduced acceptor.. Catalyzes the single-oxidation or sequential double oxidation reaction of carbohydrates primarily at carbon-2 and/or carbon-3 with the concomitant reduction of the flavin. The enzyme exhibits a broad sugar substrate specificity, oxidizing different aldopyranoses to the corresponding C-1, C-2, C-3 or C-1,2, C-2,3 and C-3,4 (di)dehydro sugars with substrate-specific regioselectivity. Accepts only a narrow range of electron acceptors such as substituted benzoquinones and complexed metal ions and reacts extremely slowly with O(2) as acceptor. May play a role in the natural recycling of plant matter by oxidizing all major monosaccharides in lignocellulose and by reducing quinone compounds or reactive radical species generated during lignin depolymerization. The protein is Pyranose dehydrogenase of Agaricus xanthodermus (Poison yellow meadow mushroom).